Here is a 299-residue protein sequence, read N- to C-terminus: Zinc finger protein 414 (299 aa).

2 stretches are compositionally biased toward polar residues: residues 1–20 and 69–81; these read MEEP…SSSG and DSCQ…TGVG. A disordered region spans residues 1 to 98; sequence MEEPSRPSSD…PRRRPPPGKQ (98 aa). C2H2-type zinc fingers lie at residues 99–123 and 135–159; these read IPCS…LRTH and FRCS…GKLH. The segment at 166–190 adopts a C2H2-type 3; degenerate zinc-finger fold; it reads FKCENCLLRFRTHRSLFKHLHVCID. Disordered regions lie at residues 193–228 and 254–299; these read QNPA…PFPL and PRLR…GACR. Basic and acidic residues predominate over residues 203-215; it reads LDKEPPVPERPPE. The span at 217–228 shows a compositional bias: low complexity; it reads DPSSSLGLPFPL.

This sequence belongs to the krueppel C2H2-type zinc-finger protein family.

The protein localises to the nucleus. May be involved in transcriptional regulation. The polypeptide is Zinc finger protein 414 (Znf414) (Mus musculus (Mouse)).